The sequence spans 387 residues: O-methyltransferase lepI (387 aa).

Position 135 to 148 (135 to 148 (FENLWPVLMALPDF)) interacts with substrate. Residues 175 to 195 (CFHWLATQPTRIANFKVLLTD) are substrate binding. S-adenosyl-L-methionine is bound by residues 227 to 228 (GG), Asp252, 275 to 276 (NF), and Arg291.

It belongs to the class I-like SAM-binding methyltransferase superfamily. Cation-independent O-methyltransferase family.

In terms of biological role, O-methyltransferase; part of the gene cluster 23 that mediates the biosynthesis of a family of 2-pyridones known as leporins. The hybrid PKS-NRPS synthetase lepA and the enoyl reductase lepG are responsible for fusion of phenylalanine with a hexaketide and subsequent release of the stable tetramic acid precursor, pre-leporin C. Because lepA lacks a designated enoylreductase (ER) domain, the required activity is provided the enoyl reductase lepG. It is possible that the dehydrogenase lepF also participates in production of pre-leporin C. Cytochrome P450 monooxygenase lepH is then required for the ring expansion step to yield leporin C. Leporin C is then presumably further oxidized by the N-hydroxylase lepD to form leporin B. LepI may possess a function in biosynthesis upstream of lepA. Leporin B is further oxidized in the presence of ferric ion to give the leporin B trimer-iron chelate, but whether or not this reaction is catalyzed by an enzyme in the pathway or by ferric ion is not determined yet. This Aspergillus flavus (strain ATCC 200026 / FGSC A1120 / IAM 13836 / NRRL 3357 / JCM 12722 / SRRC 167) protein is O-methyltransferase lepI.